Reading from the N-terminus, the 298-residue chain is tRNA dimethylallyltransferase 2 (298 aa).

Gly19–Thr26 contacts ATP. Thr21 to Thr26 provides a ligand contact to substrate. Residues Asp44 to Gln47 are interaction with substrate tRNA.

It belongs to the IPP transferase family. As to quaternary structure, monomer. Requires Mg(2+) as cofactor.

It carries out the reaction adenosine(37) in tRNA + dimethylallyl diphosphate = N(6)-dimethylallyladenosine(37) in tRNA + diphosphate. Catalyzes the transfer of a dimethylallyl group onto the adenine at position 37 in tRNAs that read codons beginning with uridine, leading to the formation of N6-(dimethylallyl)adenosine (i(6)A). The sequence is that of tRNA dimethylallyltransferase 2 from Treponema denticola (strain ATCC 35405 / DSM 14222 / CIP 103919 / JCM 8153 / KCTC 15104).